A 502-amino-acid chain; its full sequence is Membrane protein insertase YidC (502 aa).

Helical transmembrane passes span 12 to 32 (FLIF…FYIY), 286 to 306 (LDWG…YWIY), 312 to 332 (WVLS…PLGY), 382 to 402 (LPIL…IITV), 409 to 429 (FLWI…VIMG), and 452 to 472 (ITSV…VLYW).

The protein belongs to the OXA1/ALB3/YidC family. Type 1 subfamily. In terms of assembly, interacts with the Sec translocase complex via SecD. Specifically interacts with transmembrane segments of nascent integral membrane proteins during membrane integration.

The protein localises to the cell membrane. Its function is as follows. Required for the insertion and/or proper folding and/or complex formation of integral membrane proteins into the membrane. Involved in integration of membrane proteins that insert both dependently and independently of the Sec translocase complex, as well as at least some lipoproteins. Aids folding of multispanning membrane proteins. This is Membrane protein insertase YidC from Aquifex aeolicus (strain VF5).